The chain runs to 165 residues: Lipoprotein signal peptidase (165 aa).

The next 5 helical transmembrane spans lie at 10–30 (LKWL…KYWV), 42–62 (VLPG…GLFT), 71–91 (LFVW…YKLI), 105–125 (IGGA…VDFI), and 133–153 (HWPT…IVTI). Active-site residues include aspartate 123 and aspartate 141.

The protein belongs to the peptidase A8 family.

Its subcellular location is the cell inner membrane. The enzyme catalyses Release of signal peptides from bacterial membrane prolipoproteins. Hydrolyzes -Xaa-Yaa-Zaa-|-(S,diacylglyceryl)Cys-, in which Xaa is hydrophobic (preferably Leu), and Yaa (Ala or Ser) and Zaa (Gly or Ala) have small, neutral side chains.. The protein operates within protein modification; lipoprotein biosynthesis (signal peptide cleavage). Functionally, this protein specifically catalyzes the removal of signal peptides from prolipoproteins. The sequence is that of Lipoprotein signal peptidase from Blochmanniella pennsylvanica (strain BPEN).